Consider the following 365-residue polypeptide: UDP-galactose transporter homolog 1 (365 aa).

2 consecutive transmembrane segments (helical) span residues isoleucine 42–leucine 62 and alanine 80–leucine 100. Residue asparagine 115 is glycosylated (N-linked (GlcNAc...) asparagine). Helical transmembrane passes span tyrosine 182 to proline 202 and serine 206 to leucine 226. Residue asparagine 231 is glycosylated (N-linked (GlcNAc...) asparagine). Helical transmembrane passes span valine 249–serine 269, aspartate 289–glutamate 309, valine 315–phenylalanine 335, and leucine 339–tryptophan 359.

Belongs to the nucleotide-sugar transporter family. SLC35B subfamily.

Its subcellular location is the endoplasmic reticulum membrane. Its function is as follows. May be involved in specific transport of UDP-Gal from the cytosol to the Golgi lumen. Involved in the maintenance of optimal conditions for the folding of secretory pathway proteins in the endoplasmic reticulum. This Yarrowia lipolytica (strain CLIB 122 / E 150) (Yeast) protein is UDP-galactose transporter homolog 1 (HUT1).